A 207-amino-acid chain; its full sequence is Ribonuclease HII (207 aa).

In terms of domain architecture, RNase H type-2 spans 1-207 (MDVLGIDEAG…ATVEKMKNSQ (207 aa)). Residues D7, E8, and D105 each contribute to the a divalent metal cation site.

This sequence belongs to the RNase HII family. Mn(2+) serves as cofactor. It depends on Mg(2+) as a cofactor.

The protein resides in the cytoplasm. It catalyses the reaction Endonucleolytic cleavage to 5'-phosphomonoester.. Its function is as follows. Endonuclease that specifically degrades the RNA of RNA-DNA hybrids. The sequence is that of Ribonuclease HII from Methanobrevibacter smithii (strain ATCC 35061 / DSM 861 / OCM 144 / PS).